The chain runs to 475 residues: Sulfate adenylyltransferase subunit 1 (475 aa).

Residues 25 to 239 (KSLLRFLTCG…EVLETVEIQR (215 aa)) enclose the tr-type G domain. The segment at 34–41 (GSVDDGKS) is G1. GTP is bound at residue 34–41 (GSVDDGKS). Residues 92–96 (GITID) form a G2 region. The segment at 113–116 (DTPG) is G3. GTP contacts are provided by residues 113 to 117 (DTPGH) and 168 to 171 (NKMD). A G4 region spans residues 168 to 171 (NKMD). The interval 206 to 208 (SAL) is G5.

It belongs to the TRAFAC class translation factor GTPase superfamily. Classic translation factor GTPase family. CysN/NodQ subfamily. Heterodimer composed of CysD, the smaller subunit, and CysN.

It catalyses the reaction sulfate + ATP + H(+) = adenosine 5'-phosphosulfate + diphosphate. It functions in the pathway sulfur metabolism; hydrogen sulfide biosynthesis; sulfite from sulfate: step 1/3. In terms of biological role, with CysD forms the ATP sulfurylase (ATPS) that catalyzes the adenylation of sulfate producing adenosine 5'-phosphosulfate (APS) and diphosphate, the first enzymatic step in sulfur assimilation pathway. APS synthesis involves the formation of a high-energy phosphoric-sulfuric acid anhydride bond driven by GTP hydrolysis by CysN coupled to ATP hydrolysis by CysD. The chain is Sulfate adenylyltransferase subunit 1 from Escherichia coli O139:H28 (strain E24377A / ETEC).